The primary structure comprises 265 residues: Palmitoyltransferase ZDHHC21 (265 aa).

The Cytoplasmic segment spans residues 1–16 (MGLRIHFVVDPHGWCC). The helical transmembrane segment at 17–37 (MGLIVFVWLYNIVIIPKIVLF) threads the bilayer. The Extracellular portion of the chain corresponds to 38-44 (PHYEEGH). A helical membrane pass occupies residues 45 to 65 (IPGILIIIFYGISIFCLVALV). Residues 66-133 (RASLTDPGRL…NNCVGEDNHW (68 aa)) lie on the Cytoplasmic side of the membrane. A DHHC domain is found at 90–140 (ELCNKCNLMRPKRSHHCSRCGHCVRRMDHHCPWINNCVGEDNHWLFLQLCF). Cys-120 functions as the S-palmitoyl cysteine intermediate in the catalytic mechanism. A helical membrane pass occupies residues 134–154 (LFLQLCFYTELLTCYALMFSF). Topologically, residues 155–185 (CHYYYFLPLKKRNLDLFVVRHELAIMRLAAF) are extracellular. The chain crosses the membrane as a helical span at residues 186-206 (MGITMLVGITGLFYTQLIGII). The Cytoplasmic portion of the chain corresponds to 207 to 265 (TDTTSIEKMSNCCEEISRPRKPWQQTFSEVFGTRWKILWFIPFRQRQPLRVPYHFANHV).

It belongs to the DHHC palmitoyltransferase family. Widely expressed. Expressed in Henle's layer within the hair bulb and the hair shaft cuticle (at protein level). Expression is limited to the post-mitotic lineages of inner root sheath (IRS) and cuticle.

The protein localises to the golgi apparatus membrane. The protein resides in the golgi apparatus. It is found in the cis-Golgi network membrane. Its subcellular location is the cell membrane. The catalysed reaction is L-cysteinyl-[protein] + hexadecanoyl-CoA = S-hexadecanoyl-L-cysteinyl-[protein] + CoA. Functionally, palmitoyltransferase that catalyzes the addition of palmitate onto various protein substrates. Palmitoylates sex steroid hormone receptors, including ESR1, PGR and AR, thereby regulating their targeting to the plasma membrane. This affects rapid intracellular signaling by sex hormones via ERK and AKT kinases and the generation of cAMP, but does not affect that mediated by their nuclear receptor. Palmitoylates FYN, regulates its localization in hair follicles and plays a key role in epidermal homeostasis and hair follicle differentiation. Through the palmitoylation of PLCB1 and the regulation of PLCB1 downstream signaling may indirectly regulate the function of the endothelial barrier and the adhesion of leukocytes to the endothelium. Also has a palmitoyltransferase activity toward ADRA1D, positively regulating its activity and expression and may thereby play a role in vascular contraction. May also palmitoylate eNOS and LCK. This chain is Palmitoyltransferase ZDHHC21, found in Mus musculus (Mouse).